The sequence spans 883 residues: DNA mismatch repair protein MutS (883 aa).

Residue 619-626 (GPNMGGKS) participates in ATP binding.

Belongs to the DNA mismatch repair MutS family.

Functionally, this protein is involved in the repair of mismatches in DNA. It is possible that it carries out the mismatch recognition step. This protein has a weak ATPase activity. The polypeptide is DNA mismatch repair protein MutS (Marinomonas sp. (strain MWYL1)).